A 1019-amino-acid chain; its full sequence is TOG array regulator of axonemal microtubules protein 2 (1019 aa).

Disordered stretches follow at residues 28-54 (AGPRVLPPGSINSSLPHGEGSLQPEPR), 131-158 (RRLSEGLAASSRASLDPGGGPQGVPLHS), 249-311 (TPSR…AKKP), and 991-1019 (SLGGSRKATDRGVAPDSKTTGSSYPFQLD). A compositionally biased stretch (polar residues) spans 1007-1019 (SKTTGSSYPFQLD).

Belongs to the Crescerin family.

This Homo sapiens (Human) protein is TOG array regulator of axonemal microtubules protein 2.